Consider the following 334-residue polypeptide: Beta-ketoacyl-[acyl-carrier-protein] synthase III (334 aa).

Catalysis depends on residues cysteine 116 and histidine 256. The tract at residues 257 to 261 is ACP-binding; it reads QANLR. Asparagine 286 is a catalytic residue.

Belongs to the thiolase-like superfamily. FabH family. As to quaternary structure, homodimer.

The protein resides in the cytoplasm. It carries out the reaction malonyl-[ACP] + acetyl-CoA + H(+) = 3-oxobutanoyl-[ACP] + CO2 + CoA. Its pathway is lipid metabolism; fatty acid biosynthesis. Catalyzes the condensation reaction of fatty acid synthesis by the addition to an acyl acceptor of two carbons from malonyl-ACP. Catalyzes the first condensation reaction which initiates fatty acid synthesis and may therefore play a role in governing the total rate of fatty acid production. Possesses both acetoacetyl-ACP synthase and acetyl transacylase activities. Its substrate specificity determines the biosynthesis of branched-chain and/or straight-chain of fatty acids. The polypeptide is Beta-ketoacyl-[acyl-carrier-protein] synthase III (Phocaeicola vulgatus (strain ATCC 8482 / DSM 1447 / JCM 5826 / CCUG 4940 / NBRC 14291 / NCTC 11154) (Bacteroides vulgatus)).